Consider the following 273-residue polypeptide: Anthocyanin regulatory C1 protein (273 aa).

HTH myb-type domains follow at residues 9–65 (KEGV…RPNI) and 66–116 (RRGN…GRRA). DNA-binding regions (H-T-H motif) lie at residues 37–61 (WREV…LNYL) and 89–112 (WSLI…NSTL). Disordered stretches follow at residues 137 to 164 (ATPA…SAGT) and 196 to 220 (AGET…SDDC). Positions 204-214 (AGGGGGGGGEA) are enriched in gly residues.

Its subcellular location is the nucleus. In terms of biological role, controls the expression of genes involved in anthocyanin biosynthesis. Regulates the expression of at least 3 structural genes: chalcone synthase, dihydroflavonol reductase and flavonol O(3) glucosyltransferase. C1 acts as a trans-acting factor. The protein is Anthocyanin regulatory C1 protein (C1) of Zea mays (Maize).